The chain runs to 660 residues: Bifunctional polymyxin resistance protein ArnA (660 aa).

Positions 1 to 304 (MKTVVFAYHD…TLGLVQGSRL (304 aa)) are formyltransferase ArnAFT. 86 to 88 (HLI) is a binding site for (6R)-10-formyltetrahydrofolate. Residue H104 is the Proton donor; for formyltransferase activity of the active site. (6R)-10-formyltetrahydrofolate-binding positions include R114 and 136–140 (VKRAD). Residues 314-660 (RRTRVLILGV…RTVDLTDKPS (347 aa)) are dehydrogenase ArnADH. NAD(+) contacts are provided by residues D347 and 368–369 (DI). UDP-alpha-D-glucuronate-binding positions include A393, Y398, and 432 to 433 (TS). Catalysis depends on E434, which acts as the Proton acceptor; for decarboxylase activity. UDP-alpha-D-glucuronate-binding positions include R460, N492, 526 to 535 (KLIDGGKQKR), and Y613. The active-site Proton donor; for decarboxylase activity is the R619.

The protein in the N-terminal section; belongs to the Fmt family. UDP-L-Ara4N formyltransferase subfamily. It in the C-terminal section; belongs to the NAD(P)-dependent epimerase/dehydratase family. UDP-glucuronic acid decarboxylase subfamily. In terms of assembly, homohexamer, formed by a dimer of trimers.

The enzyme catalyses UDP-alpha-D-glucuronate + NAD(+) = UDP-beta-L-threo-pentopyranos-4-ulose + CO2 + NADH. It carries out the reaction UDP-4-amino-4-deoxy-beta-L-arabinose + (6R)-10-formyltetrahydrofolate = UDP-4-deoxy-4-formamido-beta-L-arabinose + (6S)-5,6,7,8-tetrahydrofolate + H(+). It functions in the pathway nucleotide-sugar biosynthesis; UDP-4-deoxy-4-formamido-beta-L-arabinose biosynthesis; UDP-4-deoxy-4-formamido-beta-L-arabinose from UDP-alpha-D-glucuronate: step 1/3. It participates in nucleotide-sugar biosynthesis; UDP-4-deoxy-4-formamido-beta-L-arabinose biosynthesis; UDP-4-deoxy-4-formamido-beta-L-arabinose from UDP-alpha-D-glucuronate: step 3/3. Its pathway is bacterial outer membrane biogenesis; lipopolysaccharide biosynthesis. Bifunctional enzyme that catalyzes the oxidative decarboxylation of UDP-glucuronic acid (UDP-GlcUA) to UDP-4-keto-arabinose (UDP-Ara4O) and the addition of a formyl group to UDP-4-amino-4-deoxy-L-arabinose (UDP-L-Ara4N) to form UDP-L-4-formamido-arabinose (UDP-L-Ara4FN). The modified arabinose is attached to lipid A and is required for resistance to polymyxin and cationic antimicrobial peptides. This is Bifunctional polymyxin resistance protein ArnA from Escherichia coli O127:H6 (strain E2348/69 / EPEC).